The primary structure comprises 761 residues: Probable beta-galactosidase 2 (761 aa).

Residues 1–23 (MGTIKNNFQLLWLILLIVVLVNG) form the signal peptide. N-linked (GlcNAc...) asparagine glycans are attached at residues N39 and N110. E195 acts as the Proton donor in catalysis. N206 is a glycosylation site (N-linked (GlcNAc...) asparagine). The active-site Nucleophile is the E267. N385, N405, N438, N501, N552, N553, N577, N592, N642, N690, and N696 each carry an N-linked (GlcNAc...) asparagine glycan.

This sequence belongs to the glycosyl hydrolase 35 family.

The enzyme catalyses Hydrolysis of terminal non-reducing beta-D-galactose residues in beta-D-galactosides.. In terms of biological role, cleaves beta-linked terminal galactosyl residues from gangliosides, glycoproteins, and glycosaminoglycans. The polypeptide is Probable beta-galactosidase 2 (glb2) (Dictyostelium discoideum (Social amoeba)).